A 265-amino-acid chain; its full sequence is NAD kinase 1 (265 aa).

Aspartate 45 (proton acceptor) is an active-site residue. NAD(+) contacts are provided by residues 45-46, 122-123, arginine 148, aspartate 150, and alanine 185; these read DG and NE.

Belongs to the NAD kinase family. A divalent metal cation is required as a cofactor.

It is found in the cytoplasm. The catalysed reaction is NAD(+) + ATP = ADP + NADP(+) + H(+). Its function is as follows. Involved in the regulation of the intracellular balance of NAD and NADP, and is a key enzyme in the biosynthesis of NADP. Catalyzes specifically the phosphorylation on 2'-hydroxyl of the adenosine moiety of NAD to yield NADP. The polypeptide is NAD kinase 1 (Bacillus cereus (strain ATCC 10987 / NRS 248)).